The sequence spans 513 residues: GMP synthase [glutamine-hydrolyzing] (513 aa).

Residues 3 to 200 enclose the Glutamine amidotransferase type-1 domain; the sequence is SVTVLDFGSQ…LIDIAGIKPD (198 aa). Cys-80 functions as the Nucleophile in the catalytic mechanism. Residues His-174 and Glu-176 contribute to the active site. The GMPS ATP-PPase domain maps to 201-388; that stretch reads WSPKSFIGHQ…LGIAEDILMR (188 aa). 228 to 234 lines the ATP pocket; sequence SGGVDST.

Homodimer.

It catalyses the reaction XMP + L-glutamine + ATP + H2O = GMP + L-glutamate + AMP + diphosphate + 2 H(+). Its pathway is purine metabolism; GMP biosynthesis; GMP from XMP (L-Gln route): step 1/1. In terms of biological role, catalyzes the synthesis of GMP from XMP. The chain is GMP synthase [glutamine-hydrolyzing] from Chlorobium phaeobacteroides (strain DSM 266 / SMG 266 / 2430).